The chain runs to 713 residues: Fibroblast growth factor receptor 4 (713 aa).

Residues 1–20 (MLPLWLVLAGLLLAVGPAAS) form the signal peptide. The segment at 21–54 (HRGEMEPDSLASGDDDEDSDGDGPHGDRSEEPVY) is disordered. Topologically, residues 21-281 (HRGEMEPDSL…AETSEAKYTD (261 aa)) are extracellular. Residues 42–54 (DGPHGDRSEEPVY) show a composition bias toward basic and acidic residues. Ig-like C2-type domains follow at residues 59–152 (PYWT…YLLD) and 161–261 (PILQ…AWLT). C84 and C136 are oxidised to a cystine. N-linked (GlcNAc...) asparagine glycans are attached at residues N133, N170, N202, N223, and N234. An intrachain disulfide couples C183 to C245. The helical transmembrane segment at 282–302 (IIIYTSGSLAVAMALIIVVLC) threads the bilayer. At 303 to 713 (RMQTQSSKQP…CLFSCPSGRT (411 aa)) the chain is on the cytoplasmic side. A Protein kinase domain is found at 379 to 667 (LVLGKPLGEG…ILAAISEEYL (289 aa)). ATP is bound by residues 385 to 393 (LGEGCFGQV) and K415. The active-site Proton acceptor is D524. A phosphotyrosine; by autocatalysis mark is found at Y554, Y555, and Y666.

Belongs to the protein kinase superfamily. Tyr protein kinase family. Fibroblast growth factor receptor subfamily. In terms of assembly, monomer. Homodimer after ligand binding. Interacts with FGF1, FGF2, FGF4, FGF6, FGF8, FGF9, FGF16, FGF17, FGF18, FGF19, FGF21 and FGF23 (in vitro). Binding affinity for FGF family members is enhanced by interactions between FGFs and heparan sulfate proteoglycans. Interacts with KLB; this strongly increases the affinity for FGF19 and FGF23. Affinity for FGF19 is strongly increased by KLB and sulfated glycosaminoglycans. KLB and KL both interact with the core-glycosylated FGFR4 in the endoplasmic reticulum and promote its degradation, so that only FGFR4 with fully mature N-glycans is expressed at the cell surface. Identified in a complex with NCAM1, CDH2, PLCG1, FRS2, SRC, SHC1, GAP43 and CTTN. Interacts with MMP14 and HIP1. Interacts with STAT3. In terms of processing, N-glycosylated. Full maturation of the glycan chains in the Golgi is essential for high affinity interaction with FGF19. Ubiquitinated. Subject to proteasomal degradation when not fully glycosylated. Post-translationally, autophosphorylated. Binding of FGF family members together with heparan sulfate proteoglycan or heparin promotes receptor dimerization and autophosphorylation on tyrosine residues. Autophosphorylation occurs in trans between the two FGFR molecules present in the dimer.

The protein resides in the cell membrane. The protein localises to the endosome. Its subcellular location is the endoplasmic reticulum. It carries out the reaction L-tyrosyl-[protein] + ATP = O-phospho-L-tyrosyl-[protein] + ADP + H(+). Present in an inactive conformation in the absence of bound ligand. Ligand binding leads to dimerization and activation by autophosphorylation on tyrosine residues. Functionally, tyrosine-protein kinase that acts as a cell-surface receptor for fibroblast growth factors and plays a role in the regulation of cell proliferation, differentiation and migration, and in regulation of lipid metabolism, bile acid biosynthesis, glucose uptake, vitamin D metabolism and phosphate homeostasis. Required for normal down-regulation of the expression of CYP7A1, the rate-limiting enzyme in bile acid synthesis, in response to FGF19. Phosphorylates PLCG1 and FRS2. Ligand binding leads to the activation of several signaling cascades. Activation of PLCG1 leads to the production of the cellular signaling molecules diacylglycerol and inositol 1,4,5-trisphosphate. Phosphorylation of FRS2 triggers recruitment of GRB2, GAB1, PIK3R1 and SOS1, and mediates activation of RAS, MAPK1/ERK2, MAPK3/ERK1 and the MAP kinase signaling pathway, as well as of the AKT1 signaling pathway. Promotes SRC-dependent phosphorylation of the matrix protease MMP14 and its lysosomal degradation. FGFR4 signaling is down-regulated by receptor internalization and degradation; MMP14 promotes internalization and degradation of FGFR4. The protein is Fibroblast growth factor receptor 4 (FGFR4) of Coturnix coturnix (Common quail).